The sequence spans 198 residues: tRNA (pseudouridine(54)-N(1))-methyltransferase (198 aa).

Residues L130, G153, 176–181 (LSPLEL), and C186 each bind S-adenosyl-L-methionine.

This sequence belongs to the methyltransferase superfamily. TrmY family. Homodimer.

It is found in the cytoplasm. It carries out the reaction pseudouridine(54) in tRNA + S-adenosyl-L-methionine = N(1)-methylpseudouridine(54) in tRNA + S-adenosyl-L-homocysteine + H(+). Functionally, specifically catalyzes the N1-methylation of pseudouridine at position 54 (Psi54) in tRNAs. The protein is tRNA (pseudouridine(54)-N(1))-methyltransferase of Methanococcus maripaludis (strain C6 / ATCC BAA-1332).